Consider the following 508-residue polypeptide: MSSHPKVKKAIERATDPGLRVDNWGYLIEVCDLVKVDAEDRGQYAMKIIEERLLKQDANMILRTLSLVVALAENCGSRLQQAISSKHFTGILYKIVDDSQVHVAVKREVLKVVHQLADSFKNDPSLKYMHDLESKIKISHPELISEPRVPKKKEMSKDREVEEEKELAEALRLSLLEFEKTGSRQQVQQPQQQQQQQQQQQQQQQQKLYPQNAEAQQQQAPTVIRKVRAMYDFNSTEQDELSFKKGDLICVVEQVYRDWWRGTLAGSVGIFPLNYVTPVTEPSQQELAAERAKDEQVFAQKDNVDRLQNKLREAGNADITQDQEINDLYGSVSPIRPQISKMLGKYAQKKEDLVSLRQILANAEITYNQLLSRASNAYAYSAPPPAPMTGPAPTPGPQSPMSPTAQYTSPTNTQTQMNGIPNPPYSYPLPQQTQQIQQSEQTQQPLSQINSPQNYASSVGNTNYTGTNHIPQPLAPYPQYTGMSMQSIPPQQPQMPQHYNMSSNSNAQ.

Residues 14–144 form the VHS domain; that stretch reads ATDPGLRVDN…KIKISHPELI (131 aa). Positions 143-162 are enriched in basic and acidic residues; sequence LISEPRVPKKKEMSKDREVE. The disordered stretch occupies residues 143–163; sequence LISEPRVPKKKEMSKDREVEE. A UIM domain is found at 162–181; the sequence is EEEKELAEALRLSLLEFEKT. Residues 222–281 enclose the SH3 domain; sequence TVIRKVRAMYDFNSTEQDELSFKKGDLICVVEQVYRDWWRGTLAGSVGIFPLNYVTPVTE. Pro residues predominate over residues 385 to 400; it reads PAPMTGPAPTPGPQSP. Positions 385 to 508 are disordered; that stretch reads PAPMTGPAPT…YNMSSNSNAQ (124 aa). Residues 401–419 are compositionally biased toward polar residues; sequence MSPTAQYTSPTNTQTQMNG. Over residues 429–449 the composition is skewed to low complexity; sequence LPQQTQQIQQSEQTQQPLSQI. The span at 450–470 shows a compositional bias: polar residues; sequence NSPQNYASSVGNTNYTGTNHI. The segment covering 483-497 has biased composition (low complexity); it reads MSMQSIPPQQPQMPQ. The segment covering 499–508 has biased composition (polar residues); the sequence is YNMSSNSNAQ.

This sequence belongs to the STAM family. In terms of assembly, component of the ESCRT-0 complex composed of HSE1 and VPS27.

It localises to the endosome membrane. Its function is as follows. Component of the ESCRT-0 complex which is the sorting receptor for ubiquitinated cargo proteins at the multivesicular body (MVB). The chain is Class E vacuolar protein-sorting machinery protein HSE1 (HSE1) from Kluyveromyces lactis (strain ATCC 8585 / CBS 2359 / DSM 70799 / NBRC 1267 / NRRL Y-1140 / WM37) (Yeast).